We begin with the raw amino-acid sequence, 1295 residues long: DNA-directed RNA polymerase subunit beta' (1295 aa).

Residues C60, C62, C75, and C78 each coordinate Zn(2+). The Mg(2+) site is built by D516, D518, and D520. C841, C914, C921, and C924 together coordinate Zn(2+).

This sequence belongs to the RNA polymerase beta' chain family. In terms of assembly, the RNAP catalytic core consists of 2 alpha, 1 beta, 1 beta' and 1 omega subunit. When a sigma factor is associated with the core the holoenzyme is formed, which can initiate transcription. It depends on Mg(2+) as a cofactor. The cofactor is Zn(2+).

It carries out the reaction RNA(n) + a ribonucleoside 5'-triphosphate = RNA(n+1) + diphosphate. Its function is as follows. DNA-dependent RNA polymerase catalyzes the transcription of DNA into RNA using the four ribonucleoside triphosphates as substrates. This chain is DNA-directed RNA polymerase subunit beta', found in Dehalococcoides mccartyi (strain ATCC BAA-2100 / JCM 16839 / KCTC 5957 / BAV1).